The chain runs to 407 residues: SERPINE1 mRNA-binding protein 1 (407 aa).

Ser-25 is subject to Phosphoserine. Positions 33–227 (AAENKKKEAG…GSGSHNWGTV (195 aa)) are disordered. Residues 51–68 (AKSAAQAAAQTNSNAAGK) show a composition bias toward low complexity. An N6-acetyllysine; alternate modification is found at Lys-52. Lys-52 participates in a covalent cross-link: Glycyl lysine isopeptide (Lys-Gly) (interchain with G-Cter in SUMO1); alternate. Lys-68 bears the N6-acetyllysine mark. 3 stretches are compositionally biased toward basic and acidic residues: residues 70–80 (LRKESQKDRKN), 89–114 (ADKK…RRPD), and 122–162 (KLID…ERPI). Lys-102 participates in a covalent cross-link: Glycyl lysine isopeptide (Lys-Gly) (interchain with G-Cter in SUMO2). 2 positions are modified to N6-acetyllysine: Lys-122 and Lys-140. A compositionally biased stretch (gly residues) spans 164–182 (GRGGLGRGRGGRGRGMGRG). Arg-165 and Arg-188 each carry omega-N-methylarginine. Over residues 183 to 199 (DGFDSRGKREFDRHSGS) the composition is skewed to basic and acidic residues. A phosphoserine mark is found at Ser-197, Ser-199, Ser-203, Ser-205, and Ser-208. Position 211 is an N6-acetyllysine; alternate (Lys-211). A Glycyl lysine isopeptide (Lys-Gly) (interchain with G-Cter in SUMO2); alternate cross-link involves residue Lys-211. Arg-216 bears the Omega-N-methylarginine mark. At Ser-221 the chain carries Phosphoserine. Position 226 is a phosphothreonine (Thr-226). Residue Lys-228 forms a Glycyl lysine isopeptide (Lys-Gly) (interchain with G-Cter in SUMO1); alternate linkage. Lys-228 participates in a covalent cross-link: Glycyl lysine isopeptide (Lys-Gly) (interchain with G-Cter in SUMO2); alternate. Leu-231, Ser-234, and Tyr-237 each carry phosphoserine. Residue Ser-234 is modified to Phosphothreonine. Lys-240 carries the post-translational modification Phosphothreonine. Residues 242 to 256 (ISYNCSDLDQSNVTE) show a composition bias toward polar residues. Disordered regions lie at residues 242-288 (ISYN…KEMT) and 327-407 (SKSE…PALA). The span at 261–274 (GEEHPVADTENKEN) shows a compositional bias: basic and acidic residues. A Glycyl lysine isopeptide (Lys-Gly) (interchain with G-Cter in SUMO2) cross-link involves residue Lys-280. Residues 327 to 341 (SKSEEAHAEDSVMDH) are compositionally biased toward basic and acidic residues. Residue Lys-328 is modified to N6-acetyllysine. Ser-329 carries the phosphoserine modification. Gly residues predominate over residues 362 to 371 (GRPGRGGRGG). 3 positions are modified to omega-N-methylarginine: Arg-363, Arg-366, and Arg-369. 2 positions are modified to phosphoserine: Ser-391 and Ser-393.

This sequence belongs to the SERBP1-HABP4 family. In terms of assembly, associates with mature 80S ribosomes. Interacts with EEF2/eEF2; interaction sequesters EEF2/eEF2 at the A-site of the ribosome, thereby blocking the interaction sites of the mRNA-tRNA complex, promoting ribosome stabilization and hibernation. Interacts with SPIN1. Interacts with CHD3 and TDRD3. Interacts with ZDHHC17 (via ANK repeats). In terms of processing, phosphorylation by MTOR inhibits SERBP1 and relieves ribosome hibernation.

It localises to the cytoplasm. The protein resides in the nucleus. Its subcellular location is the perinuclear region. In terms of biological role, ribosome-binding protein that promotes ribosome hibernation, a process during which ribosomes are stabilized in an inactive state and preserved from proteasomal degradation. Acts via its association with EEF2/eEF2 factor, sequestering EEF2/eEF2 at the A-site of the ribosome and promoting ribosome stabilization and storage in an inactive state. May also play a role in the regulation of mRNA stability: binds to the 3'-most 134 nt of the SERPINE1/PAI1 mRNA, a region which confers cyclic nucleotide regulation of message decay. Seems to play a role in PML-nuclear bodies formation. The protein is SERPINE1 mRNA-binding protein 1 of Mus musculus (Mouse).